A 484-amino-acid polypeptide reads, in one-letter code: tRNA sulfurtransferase (484 aa).

One can recognise a THUMP domain in the interval 62-166 (GPVIDELVRI…DDSYHIAHRR (105 aa)). ATP contacts are provided by residues 184–185 (LI), K266, G288, and Q297. The cysteines at positions 345 and 456 are disulfide-linked. The Rhodanese domain occupies 404–482 (PSVDDVIIDV…GHGNIKVYAP (79 aa)). C456 serves as the catalytic Cysteine persulfide intermediate.

The protein belongs to the ThiI family.

It is found in the cytoplasm. It carries out the reaction [ThiI sulfur-carrier protein]-S-sulfanyl-L-cysteine + a uridine in tRNA + 2 reduced [2Fe-2S]-[ferredoxin] + ATP + H(+) = [ThiI sulfur-carrier protein]-L-cysteine + a 4-thiouridine in tRNA + 2 oxidized [2Fe-2S]-[ferredoxin] + AMP + diphosphate. The catalysed reaction is [ThiS sulfur-carrier protein]-C-terminal Gly-Gly-AMP + S-sulfanyl-L-cysteinyl-[cysteine desulfurase] + AH2 = [ThiS sulfur-carrier protein]-C-terminal-Gly-aminoethanethioate + L-cysteinyl-[cysteine desulfurase] + A + AMP + 2 H(+). It participates in cofactor biosynthesis; thiamine diphosphate biosynthesis. Functionally, catalyzes the ATP-dependent transfer of a sulfur to tRNA to produce 4-thiouridine in position 8 of tRNAs, which functions as a near-UV photosensor. Also catalyzes the transfer of sulfur to the sulfur carrier protein ThiS, forming ThiS-thiocarboxylate. This is a step in the synthesis of thiazole, in the thiamine biosynthesis pathway. The sulfur is donated as persulfide by IscS. In Marinobacter nauticus (strain ATCC 700491 / DSM 11845 / VT8) (Marinobacter aquaeolei), this protein is tRNA sulfurtransferase.